The chain runs to 291 residues: DegV domain-containing protein CPE0026 (291 aa).

In terms of domain architecture, DegV spans 4–286; it reads FVIFTDSAAD…IGTLAVFFLG (283 aa). 2 residues coordinate hexadecanoate: threonine 63 and serine 95.

In terms of biological role, may bind long-chain fatty acids, such as palmitate, and may play a role in lipid transport or fatty acid metabolism. The protein is DegV domain-containing protein CPE0026 of Clostridium perfringens (strain 13 / Type A).